The sequence spans 490 residues: ATP synthase subunit beta, chloroplastic (490 aa).

Phosphothreonine is present on T6. Position 13 is a phosphoserine (S13). 172 to 179 (GGAGVGKT) contributes to the ATP binding site.

Belongs to the ATPase alpha/beta chains family. F-type ATPases have 2 components, CF(1) - the catalytic core - and CF(0) - the membrane proton channel. CF(1) has five subunits: alpha(3), beta(3), gamma(1), delta(1), epsilon(1). CF(0) has four main subunits: a(1), b(1), b'(1) and c(9-12).

Its subcellular location is the plastid. It is found in the chloroplast thylakoid membrane. The catalysed reaction is ATP + H2O + 4 H(+)(in) = ADP + phosphate + 5 H(+)(out). Functionally, produces ATP from ADP in the presence of a proton gradient across the membrane. The catalytic sites are hosted primarily by the beta subunits. This chain is ATP synthase subunit beta, chloroplastic, found in Aethionema grandiflorum (Persian stone-cress).